Here is a 228-residue protein sequence, read N- to C-terminus: Thymidine kinase (228 aa).

23–30 is an ATP binding site; it reads GNIGCGKS. Glutamate 50 acts as the Proton acceptor in catalysis. Substrate-binding residues include tyrosine 68, glutamine 79, and phenylalanine 109. Position 157 (arginine 157) interacts with ATP.

The protein belongs to the DCK/DGK family.

It catalyses the reaction thymidine + ATP = dTMP + ADP + H(+). In Ictaluridae (bullhead catfishes), this protein is Thymidine kinase (TK).